The chain runs to 33 residues: Beta/kappa-theraphotoxin-Hlv1a (33 aa).

Intrachain disulfides connect C2–C17, C9–C22, and C16–C29. I33 carries the isoleucine amide modification.

Belongs to the neurotoxin 10 (Hwtx-1) family. 11 (haplotoxin-2) subfamily. Expressed by the venom gland.

It is found in the secreted. Functionally, spider venom neurotoxin that blocks voltage-gated sodium channel Nav1.3/SCN3A in human (IC(50)=80 nM) and rat (IC(50)=160 nM). Partially inhibits human Kv11.1/KCNH2/ERG (25% at 175 uM). The chain is Beta/kappa-theraphotoxin-Hlv1a from Cyriopagopus lividus (Cobalt blue tarantula).